Reading from the N-terminus, the 499-residue chain is Cysteine--tRNA ligase (499 aa).

A Zn(2+)-binding site is contributed by C30. Residues 32 to 42 (PTVYDRAHLGN) carry the 'HIGH' region motif. Positions 221, 246, and 250 each coordinate Zn(2+). The 'KMSKS' region signature appears at 279–283 (KMSKS). Residue K282 participates in ATP binding.

It belongs to the class-I aminoacyl-tRNA synthetase family. In terms of assembly, monomer. Requires Zn(2+) as cofactor.

It localises to the cytoplasm. The enzyme catalyses tRNA(Cys) + L-cysteine + ATP = L-cysteinyl-tRNA(Cys) + AMP + diphosphate. The sequence is that of Cysteine--tRNA ligase from Cereibacter sphaeroides (strain ATCC 17023 / DSM 158 / JCM 6121 / CCUG 31486 / LMG 2827 / NBRC 12203 / NCIMB 8253 / ATH 2.4.1.) (Rhodobacter sphaeroides).